Here is a 270-residue protein sequence, read N- to C-terminus: L-fucose dehydrogenase (270 aa).

The NAD(+) site is built by R19, I21, D40, K41, D62, V63, N89, Y154, K158, I187, T189, and L191.

This sequence belongs to the short-chain dehydrogenases/reductases (SDR) family.

The catalysed reaction is L-fucose + NAD(+) = L-fucono-1,5-lactone + NADH + H(+). It catalyses the reaction D-arabinose + NAD(+) = D-arabinono-1,5-lactone + NADH + H(+). The enzyme catalyses L-galactose + NAD(+) = L-galactono-1,5-lactone + NADH + H(+). Catalyzes the NAD(+)-dependent oxidation of L-fucose, yielding L-fucono-1,5-lactone, which rapidly converts spontaneously to L-fucone-1,4-lactone. Does not use NADPH. Displays low activity on L-fucose, D-arabinose and L-galactose compared with rabbit and human. This is consitent with the low L-fucose metabolism observed in this species. The polypeptide is L-fucose dehydrogenase (Hsd17b14) (Rattus norvegicus (Rat)).